The sequence spans 418 residues: Hepatic and glial cell adhesion molecule (418 aa).

The signal sequence occupies residues 1-33; it reads MKRERGALSRASRALRLSPFVYLLLIQPVPLEG. Residues 34–142 enclose the Ig-like V-type domain; sequence VNITSPVRLI…GEKTINLTVD (109 aa). Residues 34–240 lie on the Extracellular side of the membrane; sequence VNITSPVRLI…VKITVYRRSS (207 aa). Residues asparagine 35, asparagine 138, asparagine 167, and asparagine 189 are each glycosylated (N-linked (GlcNAc...) asparagine). An Ig-like C2-type domain is found at 148–234; that stretch reads PQVLVASTTV…QVRSLPVKIT (87 aa). Cysteine 168 and cysteine 217 are joined by a disulfide. Residues 241–261 traverse the membrane as a helical segment; it reads LYIILSTGGIFLLVTLVTVCA. The Cytoplasmic portion of the chain corresponds to 262–418; the sequence is CWKPSKKSRK…DESGQVEISA (157 aa). A disordered region spans residues 271–418; it reads KKRKLEKQNS…DESGQVEISA (148 aa). At serine 280 the chain carries Phosphoserine. Residues 287-308 show a composition bias toward basic and acidic residues; sequence NDDRLKSEADTLPRSGEQERKN. Phosphoserine occurs at positions 321, 352, and 379. Residues 341 to 358 show a composition bias toward low complexity; the sequence is GYSVSPPVPGRSPGLPIR. A compositionally biased stretch (low complexity) spans 385 to 396; that stretch reads SSPGRSRSSSRS.

As to quaternary structure, homodimer. Dimer formation occurs predominantly through cis interactions on the cell surface. Part of a complex containing MLC1, TRPV4, AQP4 and ATP1B1. Interacts with CLCN2. Post-translationally, N-glycosylated.

It localises to the cytoplasm. Its subcellular location is the cell membrane. Involved in regulating cell motility and cell-matrix interactions. May inhibit cell growth through suppression of cell proliferation. In glia, associates and targets CLCN2 at astrocytic processes and myelinated fiber tracts where it may regulate transcellular chloride flux involved in neuron excitability. In Mus musculus (Mouse), this protein is Hepatic and glial cell adhesion molecule.